The chain runs to 147 residues: MKLHELKSAPKSRNHKAKVVGRGHGSGLGKTSGRGQKGQKARKSGRTRPGFEGGQTPLYRRLPKFGFQTVGFKKQTLSVSLDIIAKLNETTIDRELLVKHGIISSKTNEPIKVIGNKIDKKIHLKINKISEGAKKAIQSAGGSIELI.

The disordered stretch occupies residues 1-57 (MKLHELKSAPKSRNHKAKVVGRGHGSGLGKTSGRGQKGQKARKSGRTRPGFEGGQTP). Residues 10–21 (PKSRNHKAKVVG) show a composition bias toward basic residues. Residues 22-36 (RGHGSGLGKTSGRGQ) show a composition bias toward gly residues. The segment covering 37-46 (KGQKARKSGR) has biased composition (basic residues).

Belongs to the universal ribosomal protein uL15 family. In terms of assembly, part of the 50S ribosomal subunit.

In terms of biological role, binds to the 23S rRNA. The sequence is that of Large ribosomal subunit protein uL15 from Mycoplasmoides gallisepticum (strain R(low / passage 15 / clone 2)) (Mycoplasma gallisepticum).